The primary structure comprises 818 residues: H(+)/Cl(-) exchange transporter 3 (818 aa).

Topologically, residues 1–125 (MESEQLFHRG…WEMTKSLYDA (125 aa)) are cytoplasmic. A Di-leucine internalization motif; mediates targeting to late endosome and lysosome membranes motif is present at residues 13-17 (RNSYN). Positions 18–19 (SI) match the IP motif; mediates targeting to recycling endosomes motif. 3 short sequence motifs (di-leucine internalization motif; mediates targeting to late endosome and lysosome membranes) span residues 28-29 (LL), 46-47 (LL), and 71-75 (LLDLL). The chain crosses the membrane as a helical span at residues 126 to 163 (WSGWLVVTLTGLASGALAGLIDIAADWMTDLKEGICLS). The N-linked (GlcNAc...) asparagine glycan is linked to asparagine 177. Residues 209–232 (MNYIMYIFWALSFAFLAVSLVKVF) form a helical membrane-spanning segment. The Selectivity filter part_1 signature appears at 238–242 (GSGIP). Serine 239 is a binding site for chloride. Residues 241 to 248 (IPEIKTIL) constitute an intramembrane region (helical). The next 2 helical transmembrane spans lie at 258 to 276 (GKWT…VASG) and 282 to 301 (EGPL…YLFP). Positions 280 to 284 (GKEGP) match the Selectivity filter part_2 motif. Intramembrane regions (helical) lie at residues 313–325 (VLSA…VSVA) and 329–337 (PIGGVLFSL). 3 helical membrane passes run 349-367 (LWRS…RSIN), 391-416 (FPFI…AWCR), and 423-443 (FGKY…VIAF). Asparagine 451 and asparagine 479 each carry an N-linked (GlcNAc...) asparagine glycan. The next 2 membrane-spanning stretches (helical) occupy residues 500–520 (IWQL…TFGI) and 525–544 (GLFI…VGIA). The short motif at 525–529 (GLFIP) is the Selectivity filter part_3 element. Phenylalanine 527 contributes to the chloride binding site. 2 consecutive intramembrane regions (helical) follow at residues 572 to 586 (GLYA…LGGV) and 590 to 601 (TVSLVVIVFELT). An intramembrane region (note=Loop between two helices) is located at residues 602-605 (GGLE). The chain crosses the membrane as a helical span at residues 606–624 (YIVPLMAAVMTSKWVGDAF). The Cytoplasmic segment spans residues 625–818 (GREGIYEAHI…NQDPASIMFN (194 aa)). Tyrosine 630 contacts chloride. CBS domains are found at residues 658–722 (MRPR…ARKK) and 755–812 (LDMS…NQDP). ATP-binding positions include 689-691 (YNG) and 796-799 (TKKD).

The protein belongs to the chloride channel (TC 2.A.49) family. ClC-3/CLCN3 subfamily. Monomer and homodimer. Forms heterodimers with CLCN4. N-glycosylated. As to expression, detected in kidney, in the apical part of proximal tubule cells (at protein level). Expressed at high levels in the kidney while a low level expression is seen in the brain. Within the brain, it is prominent in the hippocampus, cerebral cortex and olfactory bulb. Brain, pancreas, kidney, liver, lung, retina, olfactory bulb, and spinal cord. In terms of tissue distribution, pancreas, kidney, liver, lung and retina. As to expression, brain, heart, pancreas, kidney, liver, lung, retina, olfactory bulb, and spinal cord. Expressed at high levels in the liver and at low levels in the brain.

It is found in the cytoplasmic vesicle. The protein resides in the secretory vesicle membrane. It localises to the lysosome membrane. Its subcellular location is the late endosome membrane. The protein localises to the cell membrane. It is found in the early endosome membrane. The protein resides in the recycling endosome membrane. Its activity is regulated as follows. Inhibited by Cd(2+). Its function is as follows. May influence large dense-core vesicle exocytosis in adrenal chromaffin cells. Functionally, strongly outwardly rectifying, electrogenic H(+)/Cl(-)exchanger which mediates the exchange of chloride ions against protons. The CLC channel family contains both chloride channels and proton-coupled anion transporters that exchange chloride or another anion for protons. The presence of conserved gating glutamate residues is typical for family members that function as antiporters. Strongly outwardly rectifying, electrogenic H(+)/Cl(-)exchanger which mediates the exchange of chloride ions against protons. Facilitates endosomal acidification and chloride accumulation in hepatocytes. In terms of biological role, strongly outwardly rectifying, electrogenic H(+)/Cl(-)exchanger which mediates the exchange of chloride ions against protons. The polypeptide is H(+)/Cl(-) exchange transporter 3 (Clcn3) (Mus musculus (Mouse)).